A 297-amino-acid polypeptide reads, in one-letter code: Undecaprenyl-diphosphatase (297 aa).

The next 7 membrane-spanning stretches (helical) occupy residues 39–59 (PGAA…LIYF), 85–105 (ARLA…GLTL), 113–133 (FRSL…LLVV), 151–171 (GILI…RSGT), 190–210 (SFLL…KHLL), 220–240 (ALWV…AWLL), and 249–269 (LVFV…LQTG).

Belongs to the UppP family.

Its subcellular location is the cell inner membrane. The enzyme catalyses di-trans,octa-cis-undecaprenyl diphosphate + H2O = di-trans,octa-cis-undecaprenyl phosphate + phosphate + H(+). Its function is as follows. Catalyzes the dephosphorylation of undecaprenyl diphosphate (UPP). Confers resistance to bacitracin. The chain is Undecaprenyl-diphosphatase from Myxococcus xanthus (strain DK1622).